The sequence spans 92 residues: Large ribosomal subunit protein bL34m (92 aa).

The transit peptide at 1-46 (MALLAGSLLGPTSRSAALLGGRWLQPRAWLGFPDAWGLPTPQQARG) directs the protein to the mitochondrion. Positions 40-57 (TPQQARGKSRGNEYQPSN) are enriched in polar residues. A disordered region spans residues 40–63 (TPQQARGKSRGNEYQPSNIKRKNK). Position 71 is a phosphoserine (serine 71).

It belongs to the bacterial ribosomal protein bL34 family. In terms of assembly, component of the mitochondrial ribosome large subunit (39S) which comprises a 16S rRNA and about 50 distinct proteins.

The protein localises to the mitochondrion. This Macaca fascicularis (Crab-eating macaque) protein is Large ribosomal subunit protein bL34m (MRPL34).